Consider the following 531-residue polypeptide: Peptide chain release factor 3 (531 aa).

One can recognise a tr-type G domain in the interval 10-279; sequence RDRRTFAIIS…DFAQLAPPPR (270 aa). Residues 19–26, 87–91, and 141–144 each bind GTP; these read SHPDAGKT, DTPGH, and NKLD.

This sequence belongs to the TRAFAC class translation factor GTPase superfamily. Classic translation factor GTPase family. PrfC subfamily.

The protein localises to the cytoplasm. In terms of biological role, increases the formation of ribosomal termination complexes and stimulates activities of RF-1 and RF-2. It binds guanine nucleotides but is not codon-specific. It may interact directly with the ribosome. The stimulation of RF-1 and RF-2 is significantly reduced by GTP and GDP, but not by GMP. This Dichelobacter nodosus (Bacteroides nodosus) protein is Peptide chain release factor 3 (prfC).